Here is a 674-residue protein sequence, read N- to C-terminus: Linear primary-alkylsulfatase (674 aa).

Positions 1-41 are cleaved as a signal peptide; the sequence is MKLNALSTATHGSRSSPVKLWKFSTSFLLAASIIVSGQSWA. His-192, His-194, Asp-196, His-197, Glu-303, and Glu-322 together coordinate Zn(2+). Residues 330-335 and Arg-340 contribute to the sulfate site; that span reads NTYSLR. His-367 contacts Zn(2+). Tyr-428 provides a ligand contact to sulfate.

The protein belongs to the metallo-beta-lactamase superfamily. Type III sulfatase family. As to quaternary structure, homodimer. The cofactor is Zn(2+).

It localises to the periplasm. It catalyses the reaction a primary linear alkyl sulfate ester + H2O = a primary alcohol + sulfate + H(+). Inhibited by EDTA. Slightly activated in the presence of Ca(2+). In terms of biological role, alkylsulfatase that cleaves primary alkyl sulfates such as sodium octyl sulfate and the widely used detergent sodium dodecyl sulfate (SDS). This is Linear primary-alkylsulfatase from Pseudomonas sp.